Reading from the N-terminus, the 385-residue chain is MNIHEYQAKEILRKYGVPTSTGVVVTKTESINAAIDKLNTKVYVVKAQIHAGGRGKAGGVKVVKSKEEAKKVAHDMFGINLVTHQTGPQGQKVNRLYIESGCDILKEYYFSVVFDRSASCITFIASTEGGVDIEEVAEKTPEKIIKFSVDPATGLQNFHAQGIAYELGFKDHQVKQMKEIVKATYKAFIETDAAQIEINPLIVNKEGNLLALDAKFTFDDNGLFKHPEIMALRDQDEEDPLETRAADAGLSYVKMDGSIGCMVNGAGLAMATMDIIKLYGATPANFLDVGGGADRERVKEALKIILSDKEVKGILVNIFGGIMRCDIIAEGIIAAAKDIGIKVPLVVRLAGTNVEKGKEILSNSGLEIIPAHDLADAASKIVEAI.

Residues 9 to 244 enclose the ATP-grasp domain; it reads KEILRKYGVP…QDEEDPLETR (236 aa). Residues Lys-46, 53–55, Glu-99, Cys-102, and Glu-107 each bind ATP; that span reads GRG. Mg(2+) contacts are provided by Asn-199 and Asp-213. Substrate is bound by residues Asn-264 and 321-323; that span reads GIM.

Belongs to the succinate/malate CoA ligase beta subunit family. As to quaternary structure, heterotetramer of two alpha and two beta subunits. It depends on Mg(2+) as a cofactor.

It catalyses the reaction succinate + ATP + CoA = succinyl-CoA + ADP + phosphate. It carries out the reaction GTP + succinate + CoA = succinyl-CoA + GDP + phosphate. The protein operates within carbohydrate metabolism; tricarboxylic acid cycle; succinate from succinyl-CoA (ligase route): step 1/1. Functionally, succinyl-CoA synthetase functions in the citric acid cycle (TCA), coupling the hydrolysis of succinyl-CoA to the synthesis of either ATP or GTP and thus represents the only step of substrate-level phosphorylation in the TCA. The beta subunit provides nucleotide specificity of the enzyme and binds the substrate succinate, while the binding sites for coenzyme A and phosphate are found in the alpha subunit. In Rickettsia bellii (strain OSU 85-389), this protein is Succinate--CoA ligase [ADP-forming] subunit beta.